A 140-amino-acid polypeptide reads, in one-letter code: Small ribosomal subunit protein uS19 (140 aa).

Belongs to the universal ribosomal protein uS19 family.

Functionally, protein S19 forms a complex with S13 that binds strongly to the 16S ribosomal RNA. This is Small ribosomal subunit protein uS19 from Sulfolobus acidocaldarius (strain ATCC 33909 / DSM 639 / JCM 8929 / NBRC 15157 / NCIMB 11770).